The sequence spans 140 residues: MAAITFHLDVVSAEKKLFSGRAESVQVSGSEGELGIHAGHTPLLTAITPGMVRIIKQHGEEEIIYLSGGMLEVQPSTVTVLTDTAIRGEDLDAAKAAEAKRQAEEQIRNQHGDIDFAQAASDLAKAIAQLRVIELTKKSR.

This sequence belongs to the ATPase epsilon chain family. In terms of assembly, F-type ATPases have 2 components, CF(1) - the catalytic core - and CF(0) - the membrane proton channel. CF(1) has five subunits: alpha(3), beta(3), gamma(1), delta(1), epsilon(1). CF(0) has three main subunits: a, b and c.

The protein localises to the cell inner membrane. Produces ATP from ADP in the presence of a proton gradient across the membrane. The sequence is that of ATP synthase epsilon chain 1 from Photobacterium profundum (strain SS9).